Reading from the N-terminus, the 654-residue chain is Fimbrin-2 (654 aa).

Calponin-homology (CH) domains lie at 124-241, 269-372, 394-500, and 515-623; these read DSEK…KIQL, LPPE…QHRN, SREE…RYNI, and EITD…YWTL. 2 actin-binding regions span residues 124-372 and 394-623; these read DSEK…QHRN and SREE…YWTL.

In terms of assembly, interacts with F-actin.

Its subcellular location is the cytoplasm. It is found in the cytoskeleton. Its function is as follows. Cross-links actin filaments (F-actin). Stabilizes and prevents F-actin depolymerization mediated by profilin. May regulate actin cytoarchitecture, cell cycle, cell division, cell elongation and cytoplasmic tractus. This is Fimbrin-2 from Arabidopsis thaliana (Mouse-ear cress).